The following is a 338-amino-acid chain: Acetoin:2,6-dichlorophenolindophenol oxidoreductase subunit beta (338 aa).

In terms of assembly, tetramer of 2 alpha and 2 beta subunits.

It participates in ketone degradation; acetoin degradation. Its function is as follows. Catalyzes the 2,6-dichlorophenolindophenol-dependent cleavage of acetoin into acetate and acetaldehyde, in vitro. The beta subunit is probably not the catalytic subunit of the enzyme. The sequence is that of Acetoin:2,6-dichlorophenolindophenol oxidoreductase subunit beta (acoB) from Cupriavidus necator (strain ATCC 17699 / DSM 428 / KCTC 22496 / NCIMB 10442 / H16 / Stanier 337) (Ralstonia eutropha).